We begin with the raw amino-acid sequence, 393 residues long: Lipid-A-disaccharide synthase (393 aa).

Belongs to the LpxB family.

The enzyme catalyses a lipid X + a UDP-2-N,3-O-bis[(3R)-3-hydroxyacyl]-alpha-D-glucosamine = a lipid A disaccharide + UDP + H(+). Its pathway is bacterial outer membrane biogenesis; LPS lipid A biosynthesis. Its function is as follows. Condensation of UDP-2,3-diacylglucosamine and 2,3-diacylglucosamine-1-phosphate to form lipid A disaccharide, a precursor of lipid A, a phosphorylated glycolipid that anchors the lipopolysaccharide to the outer membrane of the cell. The protein is Lipid-A-disaccharide synthase of Rhodopseudomonas palustris (strain HaA2).